Consider the following 384-residue polypeptide: Dehydrogenase ALT3 (384 aa).

This sequence belongs to the iron-containing alcohol dehydrogenase family. Fe cation serves as cofactor.

The protein operates within mycotoxin biosynthesis. Dehydrogenase; part of the gene cluster that mediates the biosynthesis of the host-selective toxins (HSTs) AAL-toxins, sphinganine-analog mycotoxins responsible for Alternaria stem canker on tomato by the tomato pathotype. The biosynthesis starts with the polyketide synthase ALT1-catalyzed C-16 carbon chain assembly from one starter acetyl-CoA unit with malonyl-CoA extender units. ALT1 also selectively transfers methyl groups at the first and the third cycle of chain elongation for AAL toxin. The C-16 polyketide chain is released from the enzyme by a nucleophilic attack of a carbanion, which is derived from R-carbon of glycin by decarboxylation, on the carbonyl carbon of polyketide acyl chain. This step is probably catalyzed by a pyridoxal 5'-phosphate-dependent aminoacyl transferase ALT4. The respective functions of the other enzymes encoded by the cluster have still to be elucidated. The sphingosine N-acyltransferase-like protein ALT7 seems not to act as a resistance/self-tolerance factor against the toxin in the toxin biosynthetic gene cluster, contrary to what is expected. This Alternaria alternata (Alternaria rot fungus) protein is Dehydrogenase ALT3.